The sequence spans 245 residues: 8-amino-3,8-dideoxy-manno-octulosonate cytidylyltransferase (245 aa).

It belongs to the KdsB family.

It is found in the cytoplasm. The enzyme catalyses 8-amino-3,8-dideoxy-alpha-D-manno-octulosonate + CTP = CMP-8-amino-3,8-dideoxy-alpha-D-manno-oct-2-ulosonate + diphosphate. It participates in bacterial outer membrane biogenesis; lipopolysaccharide biosynthesis. Activates KDO8N (a required 8-carbon sugar) for incorporation into bacterial lipopolysaccharide in the Shewanella genus. In Shewanella frigidimarina (strain NCIMB 400), this protein is 8-amino-3,8-dideoxy-manno-octulosonate cytidylyltransferase.